The chain runs to 60 residues: U1-theraphotoxin-Agm3a (60 aa).

The N-terminal stretch at 1–21 (MKFSVLVFILGLVLLLALSSA) is a signal peptide. Positions 22–29 (TEMEENAR) are excised as a propeptide. Disulfide bonds link C31/C45, C38/C50, and C44/C57.

The protein belongs to the neurotoxin 10 (Hwtx-1) family. 63 (VsTx1) subfamily. As to expression, expressed by the venom gland.

It localises to the secreted. In terms of biological role, inhibits sodium channels Nav1.7/SCN9A and potassium channels Kv11.1/KCNH2. Also binds the voltage-sensor domain of the potassium channel KvAP (from the archaeon Aeropyrum pernix) with very slow apparent binding kinetics and affects channel gating. Reaches its target by dynamically partitioning into anionic or zwitterionic headgroup lipid membranes. May bind to the open state of KvAP. In Acanthoscurria gomesiana (Tarantula spider), this protein is U1-theraphotoxin-Agm3a.